The primary structure comprises 312 residues: Pseudouridine-5'-phosphate glycosidase 2 (312 aa).

Glutamate 31 acts as the Proton donor in catalysis. Substrate contacts are provided by lysine 93 and valine 113. Aspartate 145 contributes to the Mn(2+) binding site. A substrate-binding site is contributed by 147–149; sequence SAD. Lysine 166 functions as the Nucleophile in the catalytic mechanism.

Belongs to the pseudouridine-5'-phosphate glycosidase family. Homotrimer. It depends on Mn(2+) as a cofactor.

It carries out the reaction D-ribose 5-phosphate + uracil = psi-UMP + H2O. Its function is as follows. Catalyzes the reversible cleavage of pseudouridine 5'-phosphate (PsiMP) to ribose 5-phosphate and uracil. Functions biologically in the cleavage direction, as part of a pseudouridine degradation pathway. In Photorhabdus laumondii subsp. laumondii (strain DSM 15139 / CIP 105565 / TT01) (Photorhabdus luminescens subsp. laumondii), this protein is Pseudouridine-5'-phosphate glycosidase 2.